Reading from the N-terminus, the 634-residue chain is Kelch-like protein 22 (634 aa).

Residue Ala-2 is modified to N-acetylalanine. The region spanning 50–117 (FDVVLVVEGR…IYTSELELSL (68 aa)) is the BTB domain. Kelch repeat units follow at residues 299 to 349 (CVVG…VLNN), 350 to 399 (FVYL…VVGR), 400 to 446 (YIYA…TLEG), 448 to 493 (MYIT…TLLN), 494 to 544 (KLYV…VLDN), and 545 to 593 (RIYV…VLTL). Thr-463 bears the Phosphothreonine mark. Tyr-466 carries the post-translational modification Phosphotyrosine. A Phosphothreonine modification is found at Thr-475. The tract at residues 600-634 (EPPRGTPDRSQADPDFASEVMSVSDWEEFDNSSED) is disordered. Thr-605 carries the post-translational modification Phosphothreonine. Over residues 624-634 (DWEEFDNSSED) the composition is skewed to acidic residues.

In terms of assembly, component of the BCR(KLHL22) E3 ubiquitin ligase complex, at least composed of CUL3, KLHL22 and RBX1. Interacts with PLK1. Interacts with DEPDC5 (via DEP domain); the interaction depends on amino acid availability. Interacts with YWHAE; required for the nuclear localization of KLHL22 upon amino acid starvation.

It is found in the cytoplasm. The protein localises to the cytosol. Its subcellular location is the cytoskeleton. The protein resides in the microtubule organizing center. It localises to the centrosome. It is found in the spindle. The protein localises to the nucleus. Its subcellular location is the lysosome. It functions in the pathway protein modification; protein ubiquitination. Functionally, substrate-specific adapter of a BCR (BTB-CUL3-RBX1) E3 ubiquitin ligase complex required for chromosome alignment and localization of PLK1 at kinetochores. The BCR(KLHL22) ubiquitin ligase complex mediates monoubiquitination of PLK1, leading to PLK1 dissociation from phosphoreceptor proteins and subsequent removal from kinetochores, allowing silencing of the spindle assembly checkpoint (SAC) and chromosome segregation. Monoubiquitination of PLK1 does not lead to PLK1 degradation. The BCR(KLHL22) ubiquitin ligase complex is also responsible for the amino acid-stimulated 'Lys-48' polyubiquitination and proteasomal degradation of DEPDC5. Through the degradation of DEPDC5, releases the GATOR1 complex-mediated inhibition of the TORC1 pathway. It is therefore an amino acid-dependent activator within the amino acid-sensing branch of the TORC1 pathway, indirectly regulating different cellular processes including cell growth and autophagy. This is Kelch-like protein 22 from Homo sapiens (Human).